An 846-amino-acid polypeptide reads, in one-letter code: Disrupted in schizophrenia 1 homolog (846 aa).

5 disordered regions span residues 1–53 (MQGA…IGFL), 127–147 (HSGVHSGNDRRQSERLTGDSG), 231–257 (EAEPLHQSPQEMAAEGSGSDRPHGEPR), 277–312 (TRSNRQPECGMVSSSDAGFSSQDASPAGGRSDQDGG), and 409–436 (LHGAPQRAGSDDPEAPLEGQRRTTAQDS). The interval 1–288 (MQGAGSRGAW…SNRQPECGMV (288 aa)) is interaction with MAP1A. Composition is skewed to basic and acidic residues over residues 133–143 (GNDRRQSERLT) and 248–257 (GSDRPHGEPR). Residues 277 to 300 (TRSNRQPECGMVSSSDAGFSSQDA) show a composition bias toward polar residues. An interaction with TRAF3IP1 region spans residues 289 to 686 (SSSDAGFSSQ…LERVWKADLE (398 aa)). Residues 429–587 (RRTTAQDSLP…LLEAKMLALS (159 aa)) form a required for localization to punctate cytoplasmic foci region. Residues 435–846 (DSLPGLAVTR…STAGAQEAED (412 aa)) form a necessary and sufficient for interaction with PCNT and localization at the centrosome region. Residues 440-489 (LAVTRRDWLMREKEQLQKEIEALRARVSVLEAKEQRLSQELEDQEMLLRW) are a coiled coil. Residues 588-846 (GSCFSTAKEL…STAGAQEAED (259 aa)) are interaction with ATF4 and ATF5. The interaction with NDEL1 and PAFAH1B1 stretch occupies residues 721–846 (TAALAVPRTP…STAGAQEAED (126 aa)). The interaction with PAFAH1B1 stretch occupies residues 721–846 (TAALAVPRTP…STAGAQEAED (126 aa)). Residues 795–828 (GHDEALFQSLQGELQMVKETLQTMFLQLQPAKEA) form an interaction with NDEL1 region.

As to quaternary structure, interacts with NDEL1. Interacts with CCDC88A (via C-terminus); the interaction is direct. Interacts with GSK3B. Interacts with tubulin alpha, ACTN2, ANKHD1, ATF4, ATF5, CEP63, EIF3S3, MAP1A, NDEL1, PAFAH1B1, RANBP9, SPTBN4, SYNE1 and TRAF3IP1. Interaction with microtubules may be mediated in part by TRAF3IP1. Interacts (via C-terminal) with PCNT. Interacts with CHCHD6. Interacts with CCDC141. Interacts with FBXW7, the substrate-recognition component of a SCF (SKP1-CUL1-F-box protein) E3 ubiquitin-protein ligase complex; the interaction targets DISC1 for proteasomal degradation. Interacts with ZNF365. Interacts with ATF4; inhibiting ATF4 transcription factor activity by disrupting ATF4 dimerization and DNA-binding. Interacts with PDE4B. Post-translationally, ubiquitinated. Ubiquitination with 'Lys-48'-linked polyubiquitin chains leads to its proteasomal degradation. In terms of tissue distribution, expressed in brain, heart, kidney, liver and thymus. Within the brain expression is high in the cerebral cortex, hippocampus and olfactory bulb and is also seen at lower levels in the cerebellum (at protein level).

It is found in the cytoplasm. The protein resides in the cytoskeleton. It localises to the mitochondrion. Its subcellular location is the microtubule organizing center. The protein localises to the centrosome. It is found in the postsynaptic density. Functionally, involved in the regulation of multiple aspects of embryonic and adult neurogenesis. Required for neural progenitor proliferation in the ventrical/subventrical zone during embryonic brain development and in the adult dentate gyrus of the hippocampus. Participates in the Wnt-mediated neural progenitor proliferation as a positive regulator by modulating GSK3B activity and CTNNB1 abundance. Plays a role as a modulator of the AKT-mTOR signaling pathway controlling the tempo of the process of newborn neurons integration during adult neurogenesis, including neuron positioning, dendritic development and synapse formation. Inhibits the activation of AKT-mTOR signaling upon interaction with CCDC88A. Regulates the migration of early-born granule cell precursors toward the dentate gyrus during the hippocampal development. Inhibits ATF4 transcription factor activity in neurons by disrupting ATF4 dimerization and DNA-binding. Plays a role, together with PCNT, in the microtubule network formation. This chain is Disrupted in schizophrenia 1 homolog, found in Rattus norvegicus (Rat).